The following is a 385-amino-acid chain: Chorismate synthase (385 aa).

Residues R40 and R46 each coordinate NADP(+). FMN is bound by residues 128-130 (RAS), 248-249 (QA), G293, 308-312 (KAIPS), and R334.

The protein belongs to the chorismate synthase family. Homotetramer. It depends on FMNH2 as a cofactor.

It catalyses the reaction 5-O-(1-carboxyvinyl)-3-phosphoshikimate = chorismate + phosphate. The protein operates within metabolic intermediate biosynthesis; chorismate biosynthesis; chorismate from D-erythrose 4-phosphate and phosphoenolpyruvate: step 7/7. In terms of biological role, catalyzes the anti-1,4-elimination of the C-3 phosphate and the C-6 proR hydrogen from 5-enolpyruvylshikimate-3-phosphate (EPSP) to yield chorismate, which is the branch point compound that serves as the starting substrate for the three terminal pathways of aromatic amino acid biosynthesis. This reaction introduces a second double bond into the aromatic ring system. This is Chorismate synthase from Endomicrobium trichonymphae.